An 89-amino-acid chain; its full sequence is Small ribosomal subunit protein uS15 (89 aa).

Belongs to the universal ribosomal protein uS15 family. As to quaternary structure, part of the 30S ribosomal subunit. Forms a bridge to the 50S subunit in the 70S ribosome, contacting the 23S rRNA.

Its function is as follows. One of the primary rRNA binding proteins, it binds directly to 16S rRNA where it helps nucleate assembly of the platform of the 30S subunit by binding and bridging several RNA helices of the 16S rRNA. In terms of biological role, forms an intersubunit bridge (bridge B4) with the 23S rRNA of the 50S subunit in the ribosome. The sequence is that of Small ribosomal subunit protein uS15 from Acidiphilium cryptum (strain JF-5).